A 75-amino-acid polypeptide reads, in one-letter code: Tautomerase PptA (75 aa).

P2 (proton acceptor; via imino nitrogen) is an active-site residue.

This sequence belongs to the 4-oxalocrotonate tautomerase family. PptA subfamily. In terms of assembly, homodimer.

The protein resides in the cytoplasm. In Escherichia coli O139:H28 (strain E24377A / ETEC), this protein is Tautomerase PptA.